The chain runs to 61 residues: Large ribosomal subunit protein bL28 (61 aa).

Positions 1–26 are disordered; it reads MAKDFVTGRKTTFGKKRSHALNQTNR.

Belongs to the bacterial ribosomal protein bL28 family.

The chain is Large ribosomal subunit protein bL28 from Ligilactobacillus salivarius (strain UCC118) (Lactobacillus salivarius).